A 1111-amino-acid polypeptide reads, in one-letter code: RecBCD enzyme subunit RecC (1111 aa).

This sequence belongs to the RecC family. As to quaternary structure, heterotrimer of RecB, RecC and RecD. All subunits contribute to DNA-binding.

Its function is as follows. A helicase/nuclease that prepares dsDNA breaks (DSB) for recombinational DNA repair. Binds to DSBs and unwinds DNA via a highly rapid and processive ATP-dependent bidirectional helicase activity. Unwinds dsDNA until it encounters a Chi (crossover hotspot instigator) sequence from the 3' direction. Cuts ssDNA a few nucleotides 3' to the Chi site. The properties and activities of the enzyme are changed at Chi. The Chi-altered holoenzyme produces a long 3'-ssDNA overhang and facilitates RecA-binding to the ssDNA for homologous DNA recombination and repair. Holoenzyme degrades any linearized DNA that is unable to undergo homologous recombination. In the holoenzyme this subunit recognizes the wild-type Chi sequence, and when added to isolated RecB increases its ATP-dependent helicase processivity. The chain is RecBCD enzyme subunit RecC from Buchnera aphidicola subsp. Baizongia pistaciae (strain Bp).